Here is an 887-residue protein sequence, read N- to C-terminus: ABC transporter A family member 10 (887 aa).

A run of 7 helical transmembrane segments spans residues glycine 38–leucine 58, tyrosine 198–threonine 218, isoleucine 245–tyrosine 265, valine 277–leucine 297, alanine 309–leucine 329, serine 335–tyrosine 355, and isoleucine 376–threonine 396. Over residues asparagine 443–serine 469 the composition is skewed to low complexity. Residues asparagine 443 to aspartate 474 are disordered. An ABC transporter domain is found at isoleucine 481–valine 728. Glycine 519–threonine 526 contributes to the ATP binding site. A compositionally biased stretch (low complexity) spans asparagine 774 to serine 797. Residues asparagine 774–aspartate 799 are disordered.

The protein belongs to the ABC transporter superfamily. ABCA family.

It is found in the membrane. This Dictyostelium discoideum (Social amoeba) protein is ABC transporter A family member 10 (abcA10).